Here is a 446-residue protein sequence, read N- to C-terminus: Maltoporin (446 aa).

An N-terminal signal peptide occupies residues 1–25 (MMITLRKLPLAVAVAAGVMSAQAMA).

The protein belongs to the porin LamB (TC 1.B.3) family. Homotrimer formed of three 18-stranded antiparallel beta-barrels, containing three independent channels.

The protein localises to the cell outer membrane. The enzyme catalyses beta-maltose(in) = beta-maltose(out). Its function is as follows. Involved in the transport of maltose and maltodextrins. The protein is Maltoporin of Escherichia coli O6:K15:H31 (strain 536 / UPEC).